The primary structure comprises 317 residues: R-phycoerythrin gamma chain, chloroplastic (317 aa).

The N-terminal 40 residues, 1-40 (MASPAFAVNGMFTPVKLSGSFTASMPVDSKPAASATGVRM), are a transit peptide targeting the chloroplast. Residues C94 and C133 each contribute to the phycourobilin site. C210 provides a ligand contact to (2R,3E)-phycoerythrobilin. C297 serves as a coordination point for phycourobilin.

As to quaternary structure, heteromer of 1 alpha, 1 beta and 2 gamma chains. In terms of processing, contains four covalently linked bilin chromophores.

The protein resides in the plastid. Its subcellular location is the chloroplast thylakoid membrane. In terms of biological role, critical for the incorporation of phycoerythrin in the phycobilisome complex. This is R-phycoerythrin gamma chain, chloroplastic from Aglaothamnion neglectum (Red alga).